The sequence spans 382 residues: Trophoblast glycoprotein-like (382 aa).

The N-terminal stretch at 1 to 26 (MAPRAGQPGLQGLLLVAAALSQPAAP) is a signal peptide. Intrachain disulfides connect Cys27–Cys33 and Cys31–Cys43. Over 27–307 (CPFQCYCFGG…EAAGPELEAS (281 aa)) the chain is Extracellular. LRR repeat units lie at residues 57 to 80 (PPDA…AFAG), 93 to 116 (LPLL…AFDG), 117 to 140 (LPSL…AFRG), 171 to 194 (LAEL…ALRL), and 196 to 217 (RLEQ…ELRA). Asn62 is a glycosylation site (N-linked (GlcNAc...) asparagine). Cystine bridges form between Cys238/Cys264 and Cys240/Cys285. A helical transmembrane segment spans residues 308–328 (YVFFGLVLALIGLIFLMVLYL). Residues 329-382 (NRRGIQRWMRNLREACRDQMEGYHYRYEQDADPRRAPAPAAPAGSRATSPGSGL) are Cytoplasmic-facing. A disordered region spans residues 358–382 (DADPRRAPAPAAPAGSRATSPGSGL). Positions 365–382 (PAPAAPAGSRATSPGSGL) are enriched in low complexity.

It is found in the membrane. The protein is Trophoblast glycoprotein-like (TPBGL) of Homo sapiens (Human).